Consider the following 384-residue polypeptide: N-acetyldiaminopimelate deacetylase (384 aa).

Asp74 is an active-site residue. Glu133 serves as the catalytic Proton acceptor.

Belongs to the peptidase M20A family. N-acetyldiaminopimelate deacetylase subfamily.

It carries out the reaction N-acetyl-(2S,6S)-2,6-diaminopimelate + H2O = (2S,6S)-2,6-diaminopimelate + acetate. It functions in the pathway amino-acid biosynthesis; L-lysine biosynthesis via DAP pathway; LL-2,6-diaminopimelate from (S)-tetrahydrodipicolinate (acetylase route): step 3/3. In terms of biological role, catalyzes the conversion of N-acetyl-diaminopimelate to diaminopimelate and acetate. The protein is N-acetyldiaminopimelate deacetylase of Lactiplantibacillus plantarum (strain ATCC BAA-793 / NCIMB 8826 / WCFS1) (Lactobacillus plantarum).